We begin with the raw amino-acid sequence, 256 residues long: Sugar fermentation stimulation protein homolog (256 aa).

The span at 128-141 (TGSTDTSFSGTPPT) shows a compositional bias: low complexity. The disordered stretch occupies residues 128-149 (TGSTDTSFSGTPPTNTEPANTK).

The protein belongs to the SfsA family.

This chain is Sugar fermentation stimulation protein homolog, found in Shewanella sediminis (strain HAW-EB3).